We begin with the raw amino-acid sequence, 537 residues long: Chaperonin GroEL (537 aa).

ATP-binding positions include 29–32, 86–90, glycine 413, 477–479, and aspartate 493; these read TLGP, DGTTT, and NAA.

The protein belongs to the chaperonin (HSP60) family. In terms of assembly, forms a cylinder of 14 subunits composed of two heptameric rings stacked back-to-back. Interacts with the co-chaperonin GroES.

It localises to the cytoplasm. It catalyses the reaction ATP + H2O + a folded polypeptide = ADP + phosphate + an unfolded polypeptide.. In terms of biological role, together with its co-chaperonin GroES, plays an essential role in assisting protein folding. The GroEL-GroES system forms a nano-cage that allows encapsulation of the non-native substrate proteins and provides a physical environment optimized to promote and accelerate protein folding. This is Chaperonin GroEL from Lactobacillus delbrueckii subsp. bulgaricus (strain ATCC 11842 / DSM 20081 / BCRC 10696 / JCM 1002 / NBRC 13953 / NCIMB 11778 / NCTC 12712 / WDCM 00102 / Lb 14).